A 1929-amino-acid polypeptide reads, in one-letter code: Myoferlin (1929 aa).

The segment at 1 to 53 is disordered; that stretch reads MISYEPPPSAISNPTDPGGTTIIQGDGENDEEEDRDIVDAGFNPSVPGAPGQT. Acidic residues predominate over residues 27 to 36; that stretch reads GENDEEEDRD. C2 domains lie at 62 to 179 and 218 to 354; these read VKGK…RKWV and EDDD…EEYD. Ca(2+)-binding residues include D267, D275, D323, D325, and D331. Residues 898 to 907 show a composition bias toward basic residues; that stretch reads RRLVRKRKKD. Positions 898-918 are disordered; that stretch reads RRLVRKRKKDPKVSTTSKAAL. 4 C2 domains span residues 996 to 1124, 1159 to 1283, 1408 to 1527, and 1645 to 1793; these read GANT…LLWY, RAPQ…TKHE, IPYP…SHCG, and GPPG…EKCS. Ca(2+) is bound by residues D1028, D1034, D1090, and D1092. Ca(2+) is bound by residues D1442, D1448, D1497, D1499, D1764, S1767, and D1770. The segment covering 1845-1858 has biased composition (basic and acidic residues); sequence DAEERPAGKGRDEP. The interval 1845-1867 is disordered; sequence DAEERPAGKGRDEPNMNPKLDPP. The chain crosses the membrane as a helical span at residues 1894–1914; it reads WVFIGLIILLLVLLFLGVFFY.

The protein belongs to the ferlin family. Ca(2+) serves as cofactor.

The protein resides in the cell membrane. It localises to the nucleus membrane. It is found in the cytoplasmic vesicle membrane. In terms of biological role, may play a role in membrane regeneration and repair. The polypeptide is Myoferlin (myof) (Xenopus tropicalis (Western clawed frog)).